Reading from the N-terminus, the 489-residue chain is Glycogen synthase (489 aa).

Arginine 20 is a binding site for ADP-alpha-D-glucose.

This sequence belongs to the glycosyltransferase 1 family. Bacterial/plant glycogen synthase subfamily.

It catalyses the reaction [(1-&gt;4)-alpha-D-glucosyl](n) + ADP-alpha-D-glucose = [(1-&gt;4)-alpha-D-glucosyl](n+1) + ADP + H(+). Its pathway is glycan biosynthesis; glycogen biosynthesis. Synthesizes alpha-1,4-glucan chains using ADP-glucose. This is Glycogen synthase from Chlorobium limicola (strain DSM 245 / NBRC 103803 / 6330).